The primary structure comprises 592 residues: Sodium- and chloride-dependent transporter XTRP3 (592 aa).

Residues 1–5 (MEKAR) are Cytoplasmic-facing. Residues 6–26 (PLWANSLQFVFACISYAVGLG) traverse the membrane as a helical segment. Over 27-42 (NVWRFPYLCQMYGGGS) the chain is Extracellular. Residues 43-63 (FLVPYIIMLIVEGMPLLYLEL) traverse the membrane as a helical segment. Topologically, residues 64 to 79 (AVGQRMRQGSIGAWRT) are cytoplasmic. The chain crosses the membrane as a helical span at residues 80–100 (ISPYLSGVGVASVVVSFFLSM). Topologically, residues 101 to 165 (YYNVINAWAF…ISPSLQENGG (65 aa)) are extracellular. A glycan (N-linked (GlcNAc...) asparagine) is linked at asparagine 131. The chain crosses the membrane as a helical span at residues 166 to 186 (VQWEPALCLLLAWLVVYLCIL). The Cytoplasmic portion of the chain corresponds to 187-194 (RGTESTGK). Residues 195–215 (VVYFTASLPYCVLIIYLIRGL) form a helical membrane-spanning segment. The Extracellular portion of the chain corresponds to 216-241 (TLHGATNGLMYMFTPKIEQLANPKAW). The chain crosses the membrane as a helical span at residues 242–262 (INAATQIFFSLGLGFGSLIAF). Residues 263 to 276 (ASYNEPSNNCQKHA) are Cytoplasmic-facing. Residues 277–297 (IIVSLINSFTSIFASIVTFSI) traverse the membrane as a helical segment. At 298–389 (YGFKATFNYE…EAIKNMEVSQ (92 aa)) the chain is on the extracellular side. Asparagine 357 is a glycosylation site (N-linked (GlcNAc...) asparagine). Residues 390-410 (LWSVLYFFMLLMLGIGSMLGN) form a helical membrane-spanning segment. The Cytoplasmic segment spans residues 411 to 431 (TAAILTPLTDSKIISSHLPKE). A helical transmembrane segment spans residues 432–452 (AISGLVCLVNCAIGMVFTMEA). At 453–465 (GNYWFDIFNDYAA) the chain is on the extracellular side. A helical transmembrane segment spans residues 466–486 (TLSLLLIVLVETIAVCYVYGL). The Cytoplasmic segment spans residues 487–504 (RRFESDLKAMTGRAVSWY). A helical membrane pass occupies residues 505 to 525 (WKVMWAGVSPLLIVSLFVFYL). At 526 to 554 (SDYILTGTLKYQAWDASQGQLVTKDYPAY) the chain is on the extracellular side. Residues 555 to 575 (ALAVIGLLVASSTMCIPLAAL) form a helical membrane-spanning segment. Over 576–592 (GTFVQRRLKRGDADPVA) the chain is Cytoplasmic.

It belongs to the sodium:neurotransmitter symporter (SNF) (TC 2.A.22) family. SLC6A20 subfamily. Kidney and small intestine. Expressed in the S3 segment of the proximal tubule. Expressed in neurons.

It localises to the apical cell membrane. The catalysed reaction is L-proline(out) + chloride(out) + 2 Na(+)(out) = L-proline(in) + chloride(in) + 2 Na(+)(in). It carries out the reaction L-pipecolate(out) + chloride(out) + 2 Na(+)(out) = L-pipecolate(in) + chloride(in) + 2 Na(+)(in). It catalyses the reaction sarcosine(out) + chloride(out) + 2 Na(+)(out) = sarcosine(in) + chloride(in) + 2 Na(+)(in). The enzyme catalyses N-methyl-L-proline(out) + chloride(out) + 2 Na(+)(out) = N-methyl-L-proline(in) + chloride(in) + 2 Na(+)(in). The catalysed reaction is 2-methyl-2-(methylamino)propanoate(out) + chloride(out) + 2 Na(+)(out) = 2-methyl-2-(methylamino)propanoate(in) + chloride(in) + 2 Na(+)(in). It carries out the reaction glycine betaine(out) + chloride(out) + 2 Na(+)(out) = glycine betaine(in) + chloride(in) + 2 Na(+)(in). It catalyses the reaction glycine(out) + chloride(out) + 2 Na(+)(out) = glycine(in) + chloride(in) + 2 Na(+)(in). Mediates the Na(+)- and Cl(-)-dependent uptake of imino acids such as L-proline, N-methyl-L-proline and pipecolate as well as N-methylated amino acids. Also transports glycine, regulates proline and glycine homeostasis in the brain playing a role in the modulation of NMDAR currents. This chain is Sodium- and chloride-dependent transporter XTRP3, found in Homo sapiens (Human).